A 261-amino-acid polypeptide reads, in one-letter code: Global transcriptional regulator CodY (261 aa).

The interval 1 to 159 is GAF domain; sequence MANLLDKTRK…ASTVVGLQLL (159 aa). Positions 207-226 form a DNA-binding region, H-T-H motif; the sequence is ASVIADRIGITRSVIVNALR.

It belongs to the CodY family.

It localises to the cytoplasm. Its function is as follows. DNA-binding global transcriptional regulator which is involved in the adaptive response to starvation and acts by directly or indirectly controlling the expression of numerous genes in response to nutrient availability. During rapid exponential growth, CodY is highly active and represses genes whose products allow adaptation to nutrient depletion. In Streptococcus thermophilus (strain CNRZ 1066), this protein is Global transcriptional regulator CodY.